A 318-amino-acid polypeptide reads, in one-letter code: Methionyl-tRNA formyltransferase (318 aa).

Residue 112 to 115 (SILP) coordinates (6S)-5,6,7,8-tetrahydrofolate.

It belongs to the Fmt family.

It catalyses the reaction L-methionyl-tRNA(fMet) + (6R)-10-formyltetrahydrofolate = N-formyl-L-methionyl-tRNA(fMet) + (6S)-5,6,7,8-tetrahydrofolate + H(+). In terms of biological role, attaches a formyl group to the free amino group of methionyl-tRNA(fMet). The formyl group appears to play a dual role in the initiator identity of N-formylmethionyl-tRNA by promoting its recognition by IF2 and preventing the misappropriation of this tRNA by the elongation apparatus. The chain is Methionyl-tRNA formyltransferase from Shewanella sp. (strain ANA-3).